A 206-amino-acid polypeptide reads, in one-letter code: Protein GrpE (206 aa).

Residues 1–14 are compositionally biased toward basic and acidic residues; the sequence is MDKKNEQQEVREEN. Residues 1–56 form a disordered region; sequence MDKKNEQQEVREENDTSINQESETQVELEEEVVNEECETSSEKTDEKEVDDENVTD. Over residues 24–39 the composition is skewed to acidic residues; sequence TQVELEEEVVNEECET.

The protein belongs to the GrpE family. Homodimer.

The protein localises to the cytoplasm. In terms of biological role, participates actively in the response to hyperosmotic and heat shock by preventing the aggregation of stress-denatured proteins, in association with DnaK and GrpE. It is the nucleotide exchange factor for DnaK and may function as a thermosensor. Unfolded proteins bind initially to DnaJ; upon interaction with the DnaJ-bound protein, DnaK hydrolyzes its bound ATP, resulting in the formation of a stable complex. GrpE releases ADP from DnaK; ATP binding to DnaK triggers the release of the substrate protein, thus completing the reaction cycle. Several rounds of ATP-dependent interactions between DnaJ, DnaK and GrpE are required for fully efficient folding. The polypeptide is Protein GrpE (Clostridioides difficile (strain 630) (Peptoclostridium difficile)).